A 95-amino-acid polypeptide reads, in one-letter code: Embryonic abundant protein 1 (95 aa).

The segment covering 1–10 (MASGQQQQGR) has biased composition (polar residues). The segment at 1–95 (MASGQQQQGR…IDESKYKTKS (95 aa)) is disordered. Basic and acidic residues-rich tracts occupy residues 40-64 (AEGRSRGGQTRKEQMGEEGYREMGR) and 75-95 (GGERAAREGIDIDESKYKTKS).

This sequence belongs to the small hydrophilic plant seed protein family. Expressed in dry seeds and immature embryos.

In terms of biological role, em protein may act as a cytoplasm protectant during desiccation. This chain is Embryonic abundant protein 1 (EMP1), found in Oryza sativa subsp. japonica (Rice).